Here is a 180-residue protein sequence, read N- to C-terminus: Dynactin subunit 6 (180 aa).

It belongs to the dynactin subunits 5/6 family. Dynactin subunit 6 subfamily. Subunit of dynactin, a multiprotein complex part of a tripartite complex with dynein and a adapter, such as BICDL1, BICD2 or HOOK3. The dynactin complex is built around ACTR1A/ACTB filament and consists of an actin-related filament composed of a shoulder domain, a pointed end and a barbed end.

It localises to the cytoplasm. Its subcellular location is the cytoskeleton. In terms of biological role, part of the dynactin complex that activates the molecular motor dynein for ultra-processive transport along microtubules. This is Dynactin subunit 6 (dnc-6) from Caenorhabditis elegans.